Consider the following 536-residue polypeptide: Chaperonin GroEL 2 (536 aa).

Residues 29–32 (TLGP), 86–90 (DGTTT), G412, and D495 each bind ATP.

This sequence belongs to the chaperonin (HSP60) family. Forms a cylinder of 14 subunits composed of two heptameric rings stacked back-to-back. Interacts with the co-chaperonin GroES.

It localises to the cytoplasm. It catalyses the reaction ATP + H2O + a folded polypeptide = ADP + phosphate + an unfolded polypeptide.. Functionally, together with its co-chaperonin GroES, plays an essential role in assisting protein folding. The GroEL-GroES system forms a nano-cage that allows encapsulation of the non-native substrate proteins and provides a physical environment optimized to promote and accelerate protein folding. The chain is Chaperonin GroEL 2 from Arthrobacter sp. (strain FB24).